We begin with the raw amino-acid sequence, 130 residues long: Small ribosomal subunit protein uS8 (130 aa).

The protein belongs to the universal ribosomal protein uS8 family.

Its subcellular location is the cytoplasm. The chain is Small ribosomal subunit protein uS8 (RPS15A) from Brassica napus (Rape).